A 179-amino-acid polypeptide reads, in one-letter code: Large ribosomal subunit protein uL6 (179 aa).

This sequence belongs to the universal ribosomal protein uL6 family. In terms of assembly, part of the 50S ribosomal subunit.

In terms of biological role, this protein binds to the 23S rRNA, and is important in its secondary structure. It is located near the subunit interface in the base of the L7/L12 stalk, and near the tRNA binding site of the peptidyltransferase center. This is Large ribosomal subunit protein uL6 from Clostridium acetobutylicum (strain ATCC 824 / DSM 792 / JCM 1419 / IAM 19013 / LMG 5710 / NBRC 13948 / NRRL B-527 / VKM B-1787 / 2291 / W).